The following is a 456-amino-acid chain: KAGVGFKAGVKDYRLTYYTPDYETKDTDILAAFRVTPQPGVPAEEAGAAVAAESSTGTWTTVWTDGLTSLDRYKGRCYHIEAVVGEENQFIAYVAYPLDLFEEGSVTNMFTSIVGNVFGFKALRALRLEDLRIPPSYSKTFQGPPHGIQVERDKLNKYGRPLLGCTIKPKLGLSAKNYGRAVYECLRGGLDFTKDDENVNSQPFMRWRDRFVFCAEAIYKAQAETGEIKGHYLNATAGTCEEMIKRAVFARELGAPIVMHDYLTGGFTANTSLAHYCRDNGLLLHIHRAMHAVIDRQKNHGMHFRVLAKALRMSGGDHIHAGTVVGKLEGEREMTLGFVDLLRDDFIEKDRSRGIFFTQDWVSMPGVIPVASGGIHVWHMPALTEIFGDDSVLQFGGGTLGHPWGNAPGAVANRVALEACVQARNEGRDLAREGNEIIREAAKWSPELAAACEVWK.

Residue Lys-7 is modified to N6,N6,N6-trimethyllysine. Residues Asn-116 and Thr-166 each coordinate substrate. Lys-168 (proton acceptor) is an active-site residue. Lys-170 lines the substrate pocket. The Mg(2+) site is built by Lys-194, Asp-196, and Glu-197. N6-carboxylysine is present on Lys-194. His-287 acts as the Proton acceptor in catalysis. Substrate contacts are provided by Arg-288, His-320, and Ser-372.

It belongs to the RuBisCO large chain family. Type I subfamily. Heterohexadecamer of 8 large chains and 8 small chains; disulfide-linked. The disulfide link is formed within the large subunit homodimers. Mg(2+) is required as a cofactor. Post-translationally, the disulfide bond which can form in the large chain dimeric partners within the hexadecamer appears to be associated with oxidative stress and protein turnover.

It localises to the plastid. Its subcellular location is the chloroplast. The enzyme catalyses 2 (2R)-3-phosphoglycerate + 2 H(+) = D-ribulose 1,5-bisphosphate + CO2 + H2O. The catalysed reaction is D-ribulose 1,5-bisphosphate + O2 = 2-phosphoglycolate + (2R)-3-phosphoglycerate + 2 H(+). In terms of biological role, ruBisCO catalyzes two reactions: the carboxylation of D-ribulose 1,5-bisphosphate, the primary event in carbon dioxide fixation, as well as the oxidative fragmentation of the pentose substrate in the photorespiration process. Both reactions occur simultaneously and in competition at the same active site. The polypeptide is Ribulose bisphosphate carboxylase large chain (Barnardia japonica (Chinese squill)).